The following is a 505-amino-acid chain: Flagellin (505 aa).

The protein belongs to the bacterial flagellin family.

The protein resides in the secreted. The protein localises to the bacterial flagellum. Functionally, flagellin is the subunit protein which polymerizes to form the filaments of bacterial flagella. The chain is Flagellin (fliC) from Salmonella rostock.